The sequence spans 376 residues: MFTLPPISLYIHIPWCLKKCGYCDFYSYVSKEIIPENKYIEHLLRDFERDLSLINNRNINTIFIGGGTPSLLKNTSIKNLLNGIKKRKIISKNIEISIEANPKTLEYQNFIQYKNSGINRFSLGIQTFNSKMLKKIERTYNSKDAMNAIIESKKISDNINLDLMYGLPGQSLEEALSDLQIAIQCNPSHISWYQLTIEPNTVFYAKKIQTPHQDVVFNMLIEGDKLLKKAGYKKYEISSYSKFNYQCQHNLNYWNFGDYIGIGCGSHGKITQKNGEIIRTIKNKNINDFLSGKYINSVYQVSKRDKIFEYFMNVFRLYKPIFKKHFRENTNIEESFIEKNIQIAIQEGFLINQSDCWHTTKKGKNFLNSLLEIFLK.

The 233-residue stretch at 1–233 (MFTLPPISLY…DKLLKKAGYK (233 aa)) folds into the Radical SAM core domain. S-adenosyl-L-methionine is bound at residue tyrosine 10. Positions 16, 20, and 23 each coordinate [4Fe-4S] cluster. Residues glycine 66, 67–68 (GT), glutamate 99, glutamine 126, arginine 138, and aspartate 162 each bind S-adenosyl-L-methionine.

This sequence belongs to the anaerobic coproporphyrinogen-III oxidase family. HemW subfamily. Requires [4Fe-4S] cluster as cofactor.

It is found in the cytoplasm. Probably acts as a heme chaperone, transferring heme to an unknown acceptor. Binds one molecule of heme per monomer, possibly covalently. Binds 1 [4Fe-4S] cluster. The cluster is coordinated with 3 cysteines and an exchangeable S-adenosyl-L-methionine. The sequence is that of Heme chaperone HemW from Buchnera aphidicola subsp. Acyrthosiphon pisum (strain APS) (Acyrthosiphon pisum symbiotic bacterium).